The following is a 323-amino-acid chain: V-type ATP synthase subunit C (323 aa).

The protein belongs to the V-ATPase V0D/AC39 subunit family.

In terms of biological role, produces ATP from ADP in the presence of a proton gradient across the membrane. The polypeptide is V-type ATP synthase subunit C (Thermus thermophilus (strain ATCC BAA-163 / DSM 7039 / HB27)).